A 472-amino-acid polypeptide reads, in one-letter code: Bone morphogenetic protein 3 (472 aa).

An N-terminal signal peptide occupies residues 1 to 22 (MAGASRLLFLWLGCFCVSLAQG). Positions 23 to 362 (ERPKPPFPEL…EQTLKKARRK (340 aa)) are excised as a propeptide. The segment covering 27–37 (PPFPELRKAVP) has biased composition (basic and acidic residues). A disordered region spans residues 27–53 (PPFPELRKAVPGDRTAGGGPDSELQPQ). N117, N141, N175, and N220 each carry an N-linked (GlcNAc...) asparagine glycan. Positions 320-350 (PYKTLQAQAPEKSKNKKKQRKGPHRKSQTLQ) are disordered. Over residues 333 to 346 (KNKKKQRKGPHRKS) the composition is skewed to basic residues. 3 disulfides stabilise this stretch: C370/C437, C399/C469, and C403/C471. An N-linked (GlcNAc...) asparagine glycan is attached at N463.

Belongs to the TGF-beta family. In terms of assembly, homodimer; disulfide-linked. Interacts with type II receptor ACVR2B. Expressed in adult and fetal cartilage.

Its subcellular location is the secreted. Its function is as follows. Growth factor of the TGF-beta superfamily that plays an essential role in developmental process by inducing and patterning early skeletal formation and by negatively regulating bone density. Antagonizes the ability of certain osteogenic BMPs to induce osteoprogenitor differentiation and ossification. Initiates signaling cascades by associating with type II receptor ACVR2B to activate SMAD2-dependent and SMAD-independent signaling cascades including TAK1 and JNK pathways. The sequence is that of Bone morphogenetic protein 3 (BMP3) from Homo sapiens (Human).